The chain runs to 1029 residues: Cilia- and flagella-associated protein 91 (1029 aa).

Disordered regions lie at residues 72 to 97 (NYRPAANDPNDTRQRSDALAVSGPNR) and 117 to 170 (PPSQ…PWEP). Residues 272 to 299 (LELLDNALQVREEELDDENRLRVEARKE) adopt a coiled-coil conformation. Positions 837–854 (ENQDQQEPQPQPQPSSSS) are enriched in low complexity. 2 disordered regions span residues 837–861 (ENQDQQEPQPQPQPSSSSGALDLAD) and 876–1029 (GEPS…EAAE). Positions 890–910 (QQLEADAEAEAEAEAEAEAGA) are enriched in acidic residues. A compositionally biased stretch (low complexity) spans 911–921 (EAEASAQAGAE). Over residues 922–932 (AEAEAGVEAEA) the composition is skewed to acidic residues. The span at 933–944 (EASAGAEASVGA) shows a compositional bias: low complexity. A compositionally biased stretch (acidic residues) spans 964–982 (PEAEAEAEAGAEAEAENGA). The span at 984–999 (AEARLGGEEEGFREGE) shows a compositional bias: basic and acidic residues. A compositionally biased stretch (gly residues) spans 1000–1015 (GQGGAAAGEAGPGGEL). Residues 1016–1029 (AEGEGEAGEGEAAE) show a composition bias toward acidic residues.

Belongs to the CFAP91 family. In terms of assembly, identified in a spoke-associated complex containing CFAP61, CFAP91 and CFAP251; the complex is associated with the radial spokes of the axoneme. The complex associates with Calmodulin; the association is calcium sensitive. Interacts with RSP3.

The protein localises to the cytoplasm. The protein resides in the cytoskeleton. It localises to the flagellum axoneme. Functionally, as component of a spoke-associated complex, regulates flagellar dynein activity by mediating regulatory signals between the radial spokes and dynein arms. The chain is Cilia- and flagella-associated protein 91 from Chlamydomonas reinhardtii (Chlamydomonas smithii).